The following is a 204-amino-acid chain: Probable peptidyl-tRNA hydrolase (204 aa).

Catalysis depends on His-36, which acts as the Proton acceptor. Residues Asn-86 and Asn-132 each contribute to the tRNA site.

Belongs to the PTH family.

It carries out the reaction an N-acyl-L-alpha-aminoacyl-tRNA + H2O = an N-acyl-L-amino acid + a tRNA + H(+). Its function is as follows. Peptidyl-tRNA hydrolase that cleaves nascent chains-tRNAs that are not stably fixed in the P-site of 60S ribosome-nascent chain complexes. Acts downstream of the ribosome-associated quality control (RQC) pathway to release non-ubiquitinated nascent chains from 60S and 80S ribosome-nascent chain complexes. Does not act on ubiquitinated nascent chains, which are cleaved by ANKZF1 for degradation. The polypeptide is Probable peptidyl-tRNA hydrolase (Mus musculus (Mouse)).